A 183-amino-acid polypeptide reads, in one-letter code: Small ribosomal subunit protein uS5 (183 aa).

The region spanning 11–71 is the S5 DRBM domain; that stretch reads FLERVVGINR…EEAKKSFFRV (61 aa).

Belongs to the universal ribosomal protein uS5 family. In terms of assembly, part of the 30S ribosomal subunit. Contacts proteins S4 and S8.

In terms of biological role, with S4 and S12 plays an important role in translational accuracy. Functionally, located at the back of the 30S subunit body where it stabilizes the conformation of the head with respect to the body. This is Small ribosomal subunit protein uS5 from Micrococcus luteus (Micrococcus lysodeikticus).